The sequence spans 54 residues: Low temperature-induced protein lt101.2 (54 aa).

2 helical membrane passes run 2–22 and 34–54; these read ASATFIEVILAIILPPVGVFL and LLLTLLGYIPGIIYAVYVLVA.

Belongs to the UPF0057 (PMP3) family.

The protein localises to the membrane. The chain is Low temperature-induced protein lt101.2 (LT101.2) from Hordeum vulgare (Barley).